A 680-amino-acid polypeptide reads, in one-letter code: DNA-directed RNA polymerase subunit beta' (680 aa).

The Zn(2+) site is built by Cys-69, Cys-71, Cys-87, and Cys-90. The Mg(2+) site is built by Asp-489, Asp-491, and Asp-493.

It belongs to the RNA polymerase beta' chain family. RpoC1 subfamily. As to quaternary structure, in plastids the minimal PEP RNA polymerase catalytic core is composed of four subunits: alpha, beta, beta', and beta''. When a (nuclear-encoded) sigma factor is associated with the core the holoenzyme is formed, which can initiate transcription. Mg(2+) serves as cofactor. Requires Zn(2+) as cofactor.

It localises to the plastid. The protein resides in the chloroplast. The catalysed reaction is RNA(n) + a ribonucleoside 5'-triphosphate = RNA(n+1) + diphosphate. Its function is as follows. DNA-dependent RNA polymerase catalyzes the transcription of DNA into RNA using the four ribonucleoside triphosphates as substrates. In Carica papaya (Papaya), this protein is DNA-directed RNA polymerase subunit beta'.